The following is a 45-amino-acid chain: Iota-conotoxin-like R11.13 (45 aa).

4 disulfides stabilise this stretch: Cys-5-Cys-19, Cys-12-Cys-22, Cys-18-Cys-27, and Cys-21-Cys-36. Leu-43 is modified (D-leucine). Position 45 (Arg-45) is a propeptide, removed by a carboxypeptidase.

It belongs to the conotoxin I1 superfamily. In terms of tissue distribution, expressed by the venom duct.

The protein localises to the secreted. Functionally, iota-conotoxins bind to voltage-gated sodium channels (Nav) and act as agonists by shifting the voltage-dependence of activation to more hyperpolarized levels. Produces general excitatory symptoms. This is Iota-conotoxin-like R11.13 from Conus radiatus (Rayed cone).